The chain runs to 423 residues: COP9 signalosome complex subunit 3 (423 aa).

Ala2 is subject to N-acetylalanine. The PCI domain occupies 197–365 (NFERALYFYE…GMVSFHDNPE (169 aa)). The tract at residues 402–423 (QFVQKSMGSQEDDSGNKPSSYS) is disordered. Phosphoserine occurs at positions 407, 410, and 423.

Belongs to the CSN3 family. In terms of assembly, component of the CSN complex, composed of COPS1/GPS1, COPS2, COPS3, COPS4, COPS5, COPS6, COPS7 (COPS7A or COPS7B), COPS8 and COPS9. In the complex, it probably interacts directly with COPS1, COPS4, COPS8 and COPS9. Interacts with CK2 and PKD. Interacts with the translation initiation factor EIF3S6 and IKBKG. Interacts with ERCC6. As to expression, widely expressed.

It localises to the cytoplasm. The protein resides in the nucleus. Component of the COP9 signalosome complex (CSN), a complex involved in various cellular and developmental processes. The CSN complex is an essential regulator of the ubiquitin (Ubl) conjugation pathway by mediating the deneddylation of the cullin subunits of SCF-type E3 ligase complexes, leading to decrease the Ubl ligase activity of SCF-type complexes such as SCF, CSA or DDB2. The complex is also involved in phosphorylation of p53/TP53, c-jun/JUN, IkappaBalpha/NFKBIA, ITPK1 and IRF8/ICSBP, possibly via its association with CK2 and PKD kinases. CSN-dependent phosphorylation of TP53 and JUN promotes and protects degradation by the Ubl system, respectively. Essential to maintain the survival of epiblast cells and thus the development of the postimplantation embryo. This chain is COP9 signalosome complex subunit 3 (Cops3), found in Mus musculus (Mouse).